Reading from the N-terminus, the 491-residue chain is AAA-ATPase At2g46620 (491 aa).

A helical transmembrane segment spans residues 1–21; sequence MGILWDSFLLLLVSTFALFLV. 238–245 is a binding site for ATP; the sequence is GPSGTGKS. The interval 423–460 is disordered; that stretch reads GTGRRLLLENGSRKSTSEDVSDDMSGSLCGGGGGSSPA.

This sequence belongs to the AAA ATPase family. BCS1 subfamily. Mg(2+) serves as cofactor.

The protein localises to the membrane. The catalysed reaction is ATP + H2O = ADP + phosphate + H(+). The chain is AAA-ATPase At2g46620 from Arabidopsis thaliana (Mouse-ear cress).